A 1216-amino-acid polypeptide reads, in one-letter code: Metabotropic glycine receptor (1216 aa).

The first 23 residues, 1-23, serve as a signal peptide directing secretion; it reads MGVMAYPFLFCLLLVHFGLGAIG. The Extracellular segment spans residues 24–417; that stretch reads ASREAPSRPD…CFVQEDKYLR (394 aa). The disordered stretch occupies residues 25-65; it reads SREAPSRPDPPRERTLRAKQHAQQPARASASDPSAPWSRST. Basic and acidic residues predominate over residues 28–40; the sequence is APSRPDPPRERTL. Residues 46–64 are compositionally biased toward low complexity; the sequence is AQQPARASASDPSAPWSRS. The tract at residues 85 to 281 is cache-like region; it reads YLYTGDSHKL…CENGSYKPGW (197 aa). N-linked (GlcNAc...) asparagine glycans are attached at residues asparagine 98 and asparagine 143. Cysteine 99 and cysteine 272 are oxidised to a cystine. Positions 172 and 173 each coordinate glycine. N-linked (GlcNAc...) asparagine glycosylation is present at asparagine 215. Glutamate 271 contributes to the glycine binding site. N-linked (GlcNAc...) asparagine glycosylation occurs at asparagine 274. Position 307 (aspartate 307) interacts with glycine. N-linked (GlcNAc...) asparagine glycosylation is present at asparagine 333. Residues 418–439 form a helical membrane-spanning segment; that stretch reads LAIISFQALCMLLDFLSMLVVY. The Cytoplasmic segment spans residues 440–451; the sequence is RFRKAKSIRASG. A helical transmembrane segment spans residues 452 to 474; sequence LILLETILFGSLLLYFPVVILYF. Topologically, residues 475 to 478 are extracellular; sequence EPST. Residues 479–501 form a helical membrane-spanning segment; it reads FRCILLRWVRLLGFATVYGTVTL. Cysteine 481 and cysteine 573 are joined by a disulfide. The Cytoplasmic portion of the chain corresponds to 502–525; the sequence is KLHRVLKVFLSRTAQRIPYMTGGR. The chain crosses the membrane as a helical span at residues 526-547; that stretch reads VMRMLAVILLVVFWFLVGWTSS. Residues 548–576 lie on the Extracellular side of the membrane; it reads VCQNLERHISLIGQGRTSDHLIFSMCLVE. Residues 577 to 597 form a helical membrane-spanning segment; sequence RWDYMTAAAEFLFLLWGVYLC. The Cytoplasmic portion of the chain corresponds to 598-611; the sequence is YAVRTVPSAFHEPR. Residues 612–633 form a helical membrane-spanning segment; it reads YMAVAVHNELIISAIFHTIRFV. Over 634 to 642 the chain is Extracellular; sequence LASRLQSDW. A helical transmembrane segment spans residues 643-664; it reads MLMLYFAHTHLTVTVTIGLLLI. Residues 665–1216 are Cytoplasmic-facing; that stretch reads PKFSHSSNNP…NEEVRLARKV (552 aa). Phosphoserine occurs at positions 694, 705, and 708. 2 disordered regions span residues 757-875 and 911-1000; these read RITE…ESVP and KEKT…HMKD. Basic and acidic residues predominate over residues 769 to 781; it reads CSKEDKDGGEHGS. Lysine 774 participates in a covalent cross-link: Glycyl lysine isopeptide (Lys-Gly) (interchain with G-Cter in ubiquitin). Polar residues predominate over residues 864-873; that stretch reads EDSQAVSTES. Serine 866 is subject to Phosphoserine. Residues 926 to 944 show a composition bias toward basic and acidic residues; it reads VEERAKAQKALPRERETNR. Composition is skewed to polar residues over residues 945–963 and 980–991; these read KYSN…PNSS and QRANPTTANSDL. Serine 947 bears the Phosphoserine mark. The VCPWE motif 1 motif lies at 1007 to 1011; sequence VCPWE. Residues 1038–1072 form a disordered region; that stretch reads ERNPTFSLKEKSHPKPKAADLCQQSNPKSVDKAEV. Position 1066 is a phosphoserine (serine 1066). The VCPWE motif 2 motif lies at 1072–1076; sequence VCPWE. Serine 1081 carries the post-translational modification Phosphoserine. Residues 1128-1167 are disordered; the sequence is SKVENENLNQLGEQEKKTSSSERNVPDSHNSSNNFQPPLM. Over residues 1140–1153 the composition is skewed to basic and acidic residues; sequence EQEKKTSSSERNVP. Residues 1154–1163 are compositionally biased toward polar residues; sequence DSHNSSNNFQ. The VCPWE motif 3 signature appears at 1172 to 1176; the sequence is VCPWE.

It belongs to the G-protein coupled receptor 3 family. In terms of assembly, homodimer. Associates with the RGS7-GNB5 complex, promoting its localization to the cell membrane and regulating its GTPase activator activity. Interacts (via VCPWE motifs) with GNAO1. Interacts with GPC4. Interacts with EGFLAM.

The protein localises to the cell membrane. It localises to the postsynaptic cell membrane. Its subcellular location is the presynaptic cell membrane. The protein resides in the nucleus. In terms of biological role, metabotropic receptor for glycine that controls synapse formation and function in the brain. Acts as an atypical G-protein coupled receptor that recruits and regulates the RGS7-GNB5 complex instead of activating G proteins. In absence of glycine ligand, promotes the GTPase activator activity of RGS7, increasing the GTPase activity of G protein alpha subunits, thereby driving them into their inactive GDP-bound form. Glycine-binding changes the conformation of the intracellular surface, inhibiting the GTPase activator activity of the RGS7-GNB5 complex, promoting G protein alpha subunits into their active GTP-bound form and regulating cAMP levels. Also able to bind taurine, a compound closely related to glycine, but with a two-fold lower affinity. Glycine receptor-dependent regulation of cAMP controls key ion channels, kinases and neurotrophic factors involved in neuronal excitability and synaptic transmission. Plays a pivotal role in regulating mood and cognition via its ability to regulate neuronal excitability in L2/L3 pyramidal neurons of the prefrontal cortex. Also involved in spatial learning by regulating hippocampal CA1 neuronal excitability. Acts as a synaptic organizer in the hippocampus, required for proper mossy fiber-CA3 neurocircuitry establishment, structure and function: induces presynaptic differentiation in contacting axons via its interaction with GPC4. In addition to glycine, may also act as a receptor for osteocalcin (BGLAP) hormone: osteocalcin-binding initiates a signaling response that prevents neuronal apoptosis in the hippocampus and regulates the synthesis of neurotransmitters. This Bos taurus (Bovine) protein is Metabotropic glycine receptor (GPR158).